A 227-amino-acid chain; its full sequence is Ribonuclease 3 (227 aa).

An RNase III domain is found at 4-126 (LDRLERKIGY…IIGAMSLDQG (123 aa)). Glu-39 lines the Mg(2+) pocket. The active site involves Asp-43. Residues Asp-112 and Glu-115 each contribute to the Mg(2+) site. Glu-115 is an active-site residue. Residues 153-226 (DAKTRLQEYL…AEQILKELDI (74 aa)) enclose the DRBM domain.

This sequence belongs to the ribonuclease III family. As to quaternary structure, homodimer. Mg(2+) serves as cofactor.

Its subcellular location is the cytoplasm. The enzyme catalyses Endonucleolytic cleavage to 5'-phosphomonoester.. Functionally, digests double-stranded RNA. Involved in the processing of primary rRNA transcript to yield the immediate precursors to the large and small rRNAs (23S and 16S). Processes some mRNAs, and tRNAs when they are encoded in the rRNA operon. Processes pre-crRNA and tracrRNA of type II CRISPR loci if present in the organism. This chain is Ribonuclease 3, found in Haemophilus influenzae (strain PittGG).